The primary structure comprises 432 residues: Adenylosuccinate synthetase (432 aa).

GTP is bound by residues 13 to 19 and 41 to 43; these read GDEGKGK and GHT. Asp-14 serves as the catalytic Proton acceptor. 2 residues coordinate Mg(2+): Asp-14 and Gly-41. IMP contacts are provided by residues 14 to 17, 39 to 42, Thr-130, Arg-144, Gln-225, Thr-240, and Arg-304; these read DEGK and NAGH. His-42 serves as the catalytic Proton donor. Residue 300–306 coordinates substrate; the sequence is STTGRRR. Residues Arg-306, 332 to 334, and 415 to 417 each bind GTP; these read KID and STG.

Belongs to the adenylosuccinate synthetase family. Homodimer. Mg(2+) serves as cofactor.

It localises to the cytoplasm. The enzyme catalyses IMP + L-aspartate + GTP = N(6)-(1,2-dicarboxyethyl)-AMP + GDP + phosphate + 2 H(+). It participates in purine metabolism; AMP biosynthesis via de novo pathway; AMP from IMP: step 1/2. Plays an important role in the de novo pathway of purine nucleotide biosynthesis. Catalyzes the first committed step in the biosynthesis of AMP from IMP. The chain is Adenylosuccinate synthetase from Blochmanniella pennsylvanica (strain BPEN).